A 106-amino-acid polypeptide reads, in one-letter code: Small ribosomal subunit protein bS18 (106 aa).

The disordered stretch occupies residues 1-41; the sequence is MAEEHSNQRSQTFNGERTNRPSRKPRGDGERRGRRQGGRRR.

It belongs to the bacterial ribosomal protein bS18 family. Part of the 30S ribosomal subunit. Forms a tight heterodimer with protein bS6.

Its function is as follows. Binds as a heterodimer with protein bS6 to the central domain of the 16S rRNA, where it helps stabilize the platform of the 30S subunit. This is Small ribosomal subunit protein bS18 from Oenococcus oeni (strain ATCC BAA-331 / PSU-1).